The primary structure comprises 282 residues: ATP phosphoribosyltransferase (282 aa).

It belongs to the ATP phosphoribosyltransferase family. Long subfamily. Mg(2+) serves as cofactor.

It localises to the cytoplasm. It catalyses the reaction 1-(5-phospho-beta-D-ribosyl)-ATP + diphosphate = 5-phospho-alpha-D-ribose 1-diphosphate + ATP. Its pathway is amino-acid biosynthesis; L-histidine biosynthesis; L-histidine from 5-phospho-alpha-D-ribose 1-diphosphate: step 1/9. With respect to regulation, feedback inhibited by histidine. Catalyzes the condensation of ATP and 5-phosphoribose 1-diphosphate to form N'-(5'-phosphoribosyl)-ATP (PR-ATP). Has a crucial role in the pathway because the rate of histidine biosynthesis seems to be controlled primarily by regulation of HisG enzymatic activity. In Haloarcula marismortui (strain ATCC 43049 / DSM 3752 / JCM 8966 / VKM B-1809) (Halobacterium marismortui), this protein is ATP phosphoribosyltransferase.